We begin with the raw amino-acid sequence, 361 residues long: Chorismate synthase (361 aa).

Residues arginine 48 and arginine 54 each coordinate NADP(+). FMN is bound by residues 125–127 (RSS), 238–239 (NA), glycine 278, 293–297 (KPTSS), and arginine 319.

Belongs to the chorismate synthase family. Homotetramer. The cofactor is FMNH2.

The catalysed reaction is 5-O-(1-carboxyvinyl)-3-phosphoshikimate = chorismate + phosphate. The protein operates within metabolic intermediate biosynthesis; chorismate biosynthesis; chorismate from D-erythrose 4-phosphate and phosphoenolpyruvate: step 7/7. Functionally, catalyzes the anti-1,4-elimination of the C-3 phosphate and the C-6 proR hydrogen from 5-enolpyruvylshikimate-3-phosphate (EPSP) to yield chorismate, which is the branch point compound that serves as the starting substrate for the three terminal pathways of aromatic amino acid biosynthesis. This reaction introduces a second double bond into the aromatic ring system. The protein is Chorismate synthase of Proteus mirabilis (strain HI4320).